A 295-amino-acid polypeptide reads, in one-letter code: sn-glycerol-3-phosphate transport system permease protein UgpA (295 aa).

Over 1–11 (MSSSRPVFRSR) the chain is Cytoplasmic. The helical transmembrane segment at 12-32 (WLPYLLVAPQLIITVIFFIWP) threads the bilayer. Residues 33-80 (AGEALWYSLQSVDPFGFSSQFVGLDNFVALFHDSYYIDSFWTTIKFST) are Periplasmic-facing. In terms of domain architecture, ABC transmembrane type-1 spans 76 to 284 (IKFSTFVTVS…FLVIVLTVVQ (209 aa)). The helical transmembrane segment at 81–101 (FVTVSGLLVSLFFAALVEYIV) threads the bilayer. Residues 102–109 (RGSRFYQT) lie on the Cytoplasmic side of the membrane. The chain crosses the membrane as a helical span at residues 110-130 (LMLLPYAVAPAVAAVLWIFLF). Residues 131–156 (NPGRGLITHFLAEFGYDWNHAQNSGQ) are Periplasmic-facing. Residues 157–177 (AMFLVVFASVWKQISYNFLFF) traverse the membrane as a helical segment. The Cytoplasmic segment spans residues 178-207 (YAALQSIPRSLIEAAAIDGVGPIRRFFKIA). The helical transmembrane segment at 208–228 (LPLIAPVSFFLLVVNLVYAFF) threads the bilayer. Topologically, residues 229–262 (DTFPVIDAATSGGPVQAITTLIYKIYREGFTGLD) are periplasmic. A helical transmembrane segment spans residues 263–283 (LASSAAQSVVLMFLVIVLTVV). At 284–295 (QFRYVESKVRYQ) the chain is on the cytoplasmic side.

The protein belongs to the binding-protein-dependent transport system permease family. UgpAE subfamily. In terms of assembly, the complex is composed of two ATP-binding proteins (UgpC), two transmembrane proteins (UgpA and UgpE) and a solute-binding protein (UgpB).

It is found in the cell inner membrane. Functionally, part of the ABC transporter complex UgpBAEC involved in sn-glycerol-3-phosphate (G3P) import. Probably responsible for the translocation of the substrate across the membrane. The sequence is that of sn-glycerol-3-phosphate transport system permease protein UgpA (ugpA) from Shigella dysenteriae serotype 1 (strain Sd197).